The following is an 884-amino-acid chain: MSKTHVYELAKKMGVENKELMARLKSLGIEVKSHLSVLEDEDVQKVTAPPTPPKGVQQQEEVRVTTTVIRRRPKAVAQPPEEVAPAAVESAVIEEAPAPRVEAVPEEPKASPAFAETVPAVEEPKGVEPKIGVPKVETPVASESKAEEPRVTAPPAQPKPVAAEEEKPTMNRARILGRVELPGLTTASKPVPKPAERREVVIPPKRKMEERAVTPQPAAPVADDRKKKAKTFTEPETPAGGAPGAKKGAPGGKKKEAFKKAELLEKRERIFEPGPKTGKGRRRERESVTFGKKTEITVPKAIKRIIKISESITVGELAKRMGVKATDLIRVLMKMGMMATINHPLDVDTATLIAAEFSYEIENVAIDTDEMLESAPDTPESLKKRPPVVTIMGHVDHGKTSLLDAIREANVIAGEAGGITQHIGAYDVELNGRKITFLDTPGHEAFTAMRARGAKVTDIVILVVAADDGVMPQTREAINHSKAAGVPIIIAINKIDKPEAKPERVKQELMEFGLVSEEWGGETIFVEVSAKKRINLPELLEMVLLQADVMDLKANPDKEARGTIVEAKLDRGRGPVATVLVQEGTLKVGDYFVAGVHSGRVRAMQNDRGDKVLAAGPSMPVEVIGFTGVPDAGDVFISLSDEKKAKEIASHRQQKLRETELAKHSKMSLEQLYDKIQKGEVKDLNAIVKADVQGSVEAVSDSLRKLSTDAVRLNVIHSSVGAITETDVNLASASNAIILGFNVRPEPKASAMAEKEGVDVRLYNIIYDAVEDIKKAMEGLLEPTLREKYLGRAEIREVFSVPKVGNVGGCYIQDGKVLRNASVRLLRDNVVVYEGKMSSLRRFKDDVKEVATGYECGIGLENYNDIKVGDIIEAFEIEKIATKL.

Disordered stretches follow at residues 42-62 (DVQK…QEEV) and 123-254 (EPKG…GGKK). Residues 194-212 (PAERREVVIPPKRKMEERA) are compositionally biased toward basic and acidic residues. Over residues 234-248 (EPETPAGGAPGAKKG) the composition is skewed to low complexity. A tr-type G domain is found at 384-553 (KRPPVVTIMG…LLQADVMDLK (170 aa)). The segment at 393–400 (GHVDHGKT) is G1. Residue 393–400 (GHVDHGKT) coordinates GTP. The interval 418–422 (GITQH) is G2. Residues 439–442 (DTPG) form a G3 region. GTP is bound by residues 439 to 443 (DTPGH) and 493 to 496 (NKID). The tract at residues 493 to 496 (NKID) is G4. The interval 529–531 (SAK) is G5.

Belongs to the TRAFAC class translation factor GTPase superfamily. Classic translation factor GTPase family. IF-2 subfamily.

The protein localises to the cytoplasm. Functionally, one of the essential components for the initiation of protein synthesis. Protects formylmethionyl-tRNA from spontaneous hydrolysis and promotes its binding to the 30S ribosomal subunits. Also involved in the hydrolysis of GTP during the formation of the 70S ribosomal complex. The polypeptide is Translation initiation factor IF-2 (Geobacter metallireducens (strain ATCC 53774 / DSM 7210 / GS-15)).